The sequence spans 179 residues: Large ribosomal subunit protein uL5 (179 aa).

The protein belongs to the universal ribosomal protein uL5 family. In terms of assembly, part of the 50S ribosomal subunit; part of the 5S rRNA/L5/L18/L25 subcomplex. Contacts the 5S rRNA and the P site tRNA. Forms a bridge to the 30S subunit in the 70S ribosome.

Its function is as follows. This is one of the proteins that bind and probably mediate the attachment of the 5S RNA into the large ribosomal subunit, where it forms part of the central protuberance. In the 70S ribosome it contacts protein S13 of the 30S subunit (bridge B1b), connecting the 2 subunits; this bridge is implicated in subunit movement. Contacts the P site tRNA; the 5S rRNA and some of its associated proteins might help stabilize positioning of ribosome-bound tRNAs. This chain is Large ribosomal subunit protein uL5, found in Yersinia enterocolitica serotype O:8 / biotype 1B (strain NCTC 13174 / 8081).